Consider the following 215-residue polypeptide: 3-demethoxyubiquinol 3-hydroxylase (215 aa).

6 residues coordinate Fe cation: Glu64, Glu94, His97, Glu146, Glu178, and His181.

It belongs to the COQ7 family. The cofactor is Fe cation.

The protein resides in the cell membrane. It catalyses the reaction a 5-methoxy-2-methyl-3-(all-trans-polyprenyl)benzene-1,4-diol + AH2 + O2 = a 3-demethylubiquinol + A + H2O. It participates in cofactor biosynthesis; ubiquinone biosynthesis. Catalyzes the hydroxylation of 2-nonaprenyl-3-methyl-6-methoxy-1,4-benzoquinol during ubiquinone biosynthesis. The chain is 3-demethoxyubiquinol 3-hydroxylase from Ectopseudomonas mendocina (strain ymp) (Pseudomonas mendocina).